Consider the following 363-residue polypeptide: Adenosine deaminase (363 aa).

Residue Ala2 is modified to N-acetylalanine. His15 and His17 together coordinate Zn(2+). The substrate site is built by His17 and Asp19. Residue Lys54 is modified to N6-acetyllysine. Gly184 is a substrate binding site. His214 is a Zn(2+) binding site. Glu217 (proton donor) is an active-site residue. Lys232 carries the post-translational modification N6-acetyllysine. Residue Asp295 coordinates Zn(2+). Asp296 lines the substrate pocket.

This sequence belongs to the metallo-dependent hydrolases superfamily. Adenosine and AMP deaminases family. Interacts with DPP4 (via extracellular domain). Interacts with PLG (via Kringle 4 domain); the interaction stimulates PLG activation when in complex with DPP4. It depends on Zn(2+) as a cofactor. In terms of tissue distribution, expressed in gastrointestinal tissues (at protein level).

The protein localises to the cell membrane. It localises to the cell junction. The protein resides in the cytoplasmic vesicle lumen. Its subcellular location is the cytoplasm. It is found in the lysosome. It catalyses the reaction adenosine + H2O + H(+) = inosine + NH4(+). It carries out the reaction 2'-deoxyadenosine + H2O + H(+) = 2'-deoxyinosine + NH4(+). The catalysed reaction is cordycepin + H2O + H(+) = 3'-deoxyinosine + NH4(+). In terms of biological role, catalyzes the hydrolytic deamination of adenosine and 2-deoxyadenosine. Plays an important role in purine metabolism and in adenosine homeostasis. Modulates signaling by extracellular adenosine, and so contributes indirectly to cellular signaling events. Acts as a positive regulator of T-cell coactivation, by binding DPP4. Its interaction with DPP4 regulates lymphocyte-epithelial cell adhesion. Enhances dendritic cell immunogenicity by affecting dendritic cell costimulatory molecule expression and cytokines and chemokines secretion. Enhances CD4+ T-cell differentiation and proliferation. Acts as a positive modulator of adenosine receptors ADORA1 and ADORA2A, by enhancing their ligand affinity via conformational change. Stimulates plasminogen activation. Plays a role in male fertility. Plays a protective role in early postimplantation embryonic development. Also responsible for the deamination of cordycepin (3'-deoxyadenosine), a fungal natural product that shows antitumor, antibacterial, antifungal, antivirus, and immune regulation properties. The polypeptide is Adenosine deaminase (ADA) (Bos taurus (Bovine)).